A 320-amino-acid polypeptide reads, in one-letter code: o-succinylbenzoate synthase (320 aa).

Residue K133 is the Proton donor of the active site. Residues D161, E190, and D213 each coordinate Mg(2+). K235 acts as the Proton acceptor in catalysis.

Belongs to the mandelate racemase/muconate lactonizing enzyme family. MenC type 1 subfamily. It depends on a divalent metal cation as a cofactor.

The enzyme catalyses (1R,6R)-6-hydroxy-2-succinyl-cyclohexa-2,4-diene-1-carboxylate = 2-succinylbenzoate + H2O. The protein operates within quinol/quinone metabolism; 1,4-dihydroxy-2-naphthoate biosynthesis; 1,4-dihydroxy-2-naphthoate from chorismate: step 4/7. Its pathway is quinol/quinone metabolism; menaquinone biosynthesis. In terms of biological role, converts 2-succinyl-6-hydroxy-2,4-cyclohexadiene-1-carboxylate (SHCHC) to 2-succinylbenzoate (OSB). The sequence is that of o-succinylbenzoate synthase from Shigella boydii serotype 4 (strain Sb227).